Consider the following 260-residue polypeptide: uncharacterized protein (260 aa).

An N-terminal signal peptide occupies residues 1-22 (MGYSKRFALYISILILIVMVAG). Residue Cys23 is the site of N-palmitoyl cysteine attachment. A lipid anchor (S-diacylglycerol cysteine) is attached at Cys23.

This sequence belongs to the staphylococcal tandem lipoprotein family.

It is found in the cell membrane. This is an uncharacterized protein from Staphylococcus aureus (strain N315).